Reading from the N-terminus, the 343-residue chain is Ferrochelatase (343 aa).

Residues histidine 191 and glutamate 270 each coordinate Fe cation.

The protein belongs to the ferrochelatase family.

Its subcellular location is the cytoplasm. The catalysed reaction is heme b + 2 H(+) = protoporphyrin IX + Fe(2+). The protein operates within porphyrin-containing compound metabolism; protoheme biosynthesis; protoheme from protoporphyrin-IX: step 1/1. In terms of biological role, catalyzes the ferrous insertion into protoporphyrin IX. The polypeptide is Ferrochelatase (Phenylobacterium zucineum (strain HLK1)).